Consider the following 137-residue polypeptide: Large ribosomal subunit protein uL16 (137 aa).

Belongs to the universal ribosomal protein uL16 family. Part of the 50S ribosomal subunit.

Functionally, binds 23S rRNA and is also seen to make contacts with the A and possibly P site tRNAs. The sequence is that of Large ribosomal subunit protein uL16 from Stenotrophomonas maltophilia (strain R551-3).